A 134-amino-acid polypeptide reads, in one-letter code: Calcitonin gene-related peptide 2 (134 aa).

Positions 1–26 are cleaved as a signal peptide; sequence MDFWKFFPFLALSSMWVLCLASSLQA. The propeptide occupies 27 to 86; it reads APFRSALESSLDLGTLSDQEKHLLLAALIQDYEQKARKLEQEEQETEGSRKGSSSSVISQ. A disordered region spans residues 65 to 91; that stretch reads LEQEEQETEGSRKGSSSSVISQKRSCN. Over residues 77-89 the composition is skewed to low complexity; the sequence is KGSSSSVISQKRS. Cysteine 90 and cysteine 95 are oxidised to a cystine. Phenylalanine 125 carries the post-translational modification Phenylalanine amide. Positions 131 to 134 are excised as a propeptide; it reads DLRV.

It belongs to the calcitonin family.

The protein resides in the secreted. Its function is as follows. CALCB/CGRP2 is a peptide hormone that induces vasodilation mediated by the CALCRL-RAMP1 receptor complex. Dilates a variety of vessels including the coronary, cerebral and systemic vasculature. Its abundance in the CNS also points toward a neurotransmitter or neuromodulator role. The chain is Calcitonin gene-related peptide 2 from Rattus norvegicus (Rat).